The primary structure comprises 260 residues: Proteasome subunit alpha type-1 (260 aa).

The interval 231–260 (FLEGLEERPQRKPALPADEPAEKAEEPMEH) is disordered. A compositionally biased stretch (basic and acidic residues) spans 250-260 (PAEKAEEPMEH).

The protein belongs to the peptidase T1A family. In terms of assembly, the 26S proteasome consists of a 20S proteasome core and two 19S regulatory subunits. The 20S proteasome core is a barrel-shaped complex made of 28 subunits that are arranged in four stacked rings. The two outer rings are each formed by seven alpha subunits, and the two inner rings are formed by seven beta subunits. The proteolytic activity is exerted by three beta-subunits PSMB5, PSMB6 and PSMB7.

It localises to the cytoplasm. Its subcellular location is the nucleus. In terms of biological role, component of the 20S core proteasome complex involved in the proteolytic degradation of most intracellular proteins. This complex plays numerous essential roles within the cell by associating with different regulatory particles. Associated with two 19S regulatory particles, forms the 26S proteasome and thus participates in the ATP-dependent degradation of ubiquitinated proteins. The 26S proteasome plays a key role in the maintenance of protein homeostasis by removing misfolded or damaged proteins that could impair cellular functions, and by removing proteins whose functions are no longer required. Associated with the PA200 or PA28, the 20S proteasome mediates ubiquitin-independent protein degradation. This type of proteolysis is required in several pathways including spermatogenesis (20S-PA200 complex) or generation of a subset of MHC class I-presented antigenic peptides (20S-PA28 complex). This chain is Proteasome subunit alpha type-1 (PSMA1), found in Gallus gallus (Chicken).